The following is a 289-amino-acid chain: Eukaryotic translation initiation factor 3 subunit G (289 aa).

Disordered stretches follow at residues 1–31 (MSRL…VISN) and 151–199 (DTMA…GEKM). Positions 209–287 (ATLRVTNVSE…LILRVEFAKK (79 aa)) constitute an RRM domain.

The protein belongs to the eIF-3 subunit G family. In terms of assembly, component of the eukaryotic translation initiation factor 3 (eIF-3) complex.

Its subcellular location is the cytoplasm. In terms of biological role, RNA-binding component of the eukaryotic translation initiation factor 3 (eIF-3) complex, which is involved in protein synthesis of a specialized repertoire of mRNAs and, together with other initiation factors, stimulates binding of mRNA and methionyl-tRNAi to the 40S ribosome. The eIF-3 complex specifically targets and initiates translation of a subset of mRNAs involved in cell proliferation. This subunit can bind 18S rRNA. This chain is Eukaryotic translation initiation factor 3 subunit G, found in Coccidioides immitis (strain RS) (Valley fever fungus).